The following is an 85-amino-acid chain: Toxin 3FTx-Lei1 (85 aa).

The N-terminal stretch at 1-21 (MKTLLLSLVVVTFVCLDLAHT) is a signal peptide. 5 cysteine pairs are disulfide-bonded: C24/C45, C27/C32, C38/C63, C67/C78, and C79/C84.

It belongs to the three-finger toxin family. Ancestral subfamily. As to expression, expressed by the venom gland.

Its subcellular location is the secreted. In Leioheterodon madagascariensis (Malagasy giant hognose snake), this protein is Toxin 3FTx-Lei1.